The chain runs to 175 residues: Nascent polypeptide-associated complex subunit beta (175 aa).

Disordered regions lie at residues 1-36 and 129-175; these read MDKE…SQGD and RQAA…EELE. The 68-residue stretch at 34 to 101 folds into the NAC-A/B domain; it reads QGDDRKLQAA…GQTKELTELV (68 aa). Residues 149 to 163 are compositionally biased toward acidic residues; that stretch reads EGDDEIPDLVDNFDE. Positions 164–175 are enriched in basic and acidic residues; sequence AEVKKSDLEELE.

It belongs to the NAC-beta family. In terms of assembly, part of the nascent polypeptide-associated complex (NAC), consisting of EGD2 and EGD1. NAC associates with ribosomes via EGD1.

It is found in the cytoplasm. It localises to the nucleus. Functionally, component of the nascent polypeptide-associated complex (NAC), a dynamic component of the ribosomal exit tunnel, protecting the emerging polypeptides from interaction with other cytoplasmic proteins to ensure appropriate nascent protein targeting. The NAC complex also promotes mitochondrial protein import by enhancing productive ribosome interactions with the outer mitochondrial membrane and blocks the inappropriate interaction of ribosomes translating non-secretory nascent polypeptides with translocation sites in the membrane of the endoplasmic reticulum. EGD1 may act as a transcription factor that exert a negative effect on the expression of several genes that are transcribed by RNA polymerase II. This chain is Nascent polypeptide-associated complex subunit beta (EGD1), found in Cryptococcus neoformans var. neoformans serotype D (strain B-3501A) (Filobasidiella neoformans).